A 361-amino-acid chain; its full sequence is Peptide chain release factor 1 (361 aa).

N5-methylglutamine is present on Gln-235.

Belongs to the prokaryotic/mitochondrial release factor family. In terms of processing, methylated by PrmC. Methylation increases the termination efficiency of RF1.

It is found in the cytoplasm. Functionally, peptide chain release factor 1 directs the termination of translation in response to the peptide chain termination codons UAG and UAA. The protein is Peptide chain release factor 1 of Buchnera aphidicola subsp. Schizaphis graminum (strain Sg).